The sequence spans 897 residues: MNVKETKLEDVLKSRGIDMKDAYNISEADIPEAKESTQKLMDIYYTLKVTADMEAAYWYNRTWWENDGEVIEVRRAKAVAASLSHMTPTILPYEKLVMNKTKNVRGAFPFPWVCASFFNAQAEALMNEVDAPAENEADSVSVVGAGGGNVTESYGNVISIAKKFGMRKEEIPVLVKTSKPWEGISVEELSNKYSKMTPGYDQFKNIMESVICMFDSFAIPQGREVINYYMPLQYGFDGIIKLCDEKIAEVMGEAGDDGDFGMSRGYYYAAMKEITKGLSAWCENYSKRAKYLASIETDSEIKANYEKIEEVMGNIAHKKPANFWEAIQMTLCCHFGVVNEDPQSGLSIGRLGQVLQPFYEKDVEDGIMTDEEVIELLELYRIKITCIECFASAGVSGGVLSGNTFNNLSLGGQNYDGLSAVTPLEYLIVEAGMRNQTPQPTLSVLYDEKTPEDFLMKAASCTKLGLGYPAWMNNQTGMNFMMRNYGPEGMDLHDARAWCLGGCLESAPGCFLPLEYNGKVTMIPGGASPTCGTGVHFIGMPKVLELVLTNGLDKRTGKQVYPPHNKKLDSYETMVNQWKEYMELTTDVVNRCNNIQMDIWRKYNMPAVNSLLKPDCFKKGKHIGTMGARYNSCINFESCGTITFVNSLSSIKKNVFDDSKFTIEEMTDAMLNNFGFKTAYETEVFSPDFRESTDKSTKYEKIFAACVNAPKYGNADKYADEIFKAYHYYIYDMTHKFRSYYGKPLYLCQISVSTHGPQGFVTLATADGRLAGTTYSDGSVSAAAGTDKNGIYAIFESATVYDHSMHQNAQMNLKLHPTAVKGINGTRKLLDLVRAYMRKGGFHVQFNVVDSKTLRDAQLTPEKYRELMVRVAGFTQYWCEIGKPIQDEVIYRTEYDK.

The PFL domain occupies 35–770; the sequence is ESTQKLMDIY…VTLATADGRL (736 aa). Ser344 and Cys503 together coordinate 4-hydroxyphenylacetate. Cys503 functions as the Cysteine radical intermediate in the catalytic mechanism. Catalysis depends on Glu505, which acts as the Proton donor. Positions 536 and 637 each coordinate 4-hydroxyphenylacetate. A Glycine radical domain is found at 778–897; that stretch reads GSVSAAAGTD…EVIYRTEYDK (120 aa). Glycine radical is present on Gly873.

The protein belongs to the glycyl radical enzyme (GRE) family. HPAD subfamily. In terms of assembly, heterooctamer consisting of 4 large (HpdB) subunits and 4 small (HpdC) subunits, arranged as a tetramer of heterodimers. Also forms a catalytically inactive homodimer. In terms of processing, requires the activating protein CsdA to generate the key active site glycyl radical that is involved in catalysis. Post-translationally, phosphorylated on serine. Phosphorylation may trigger the formation of the active heterooctamers and thereby regulates enzyme activity.

The enzyme catalyses 4-hydroxyphenylacetate + H(+) = 4-methylphenol + CO2. The catalysed reaction is 3,4-dihydroxyphenylacetate + H(+) = 4-methylcatechol + CO2. In terms of biological role, glycyl radical subunit of the HPA decarboxylase that decarboxylates phenylacetates with a hydroxyl group in the p-position. Active toward 4-hydroxyphenylacetate and 3,4-dihydroxyphenylacetate, forming 4-methylphenol and 4-methylcatechol, respectively. Is likely involved in the catabolism of aromatic amino acids such as tyrosine fermentation. 4-methylphenol (p-cresol) formation provides metabolic toxicity, which allows an active suppression of other microbes and may provide growth advantages for the producers in highly competitive environments. The large subunit is the catalytic subunit that binds the substrate. The sequence is that of 4-hydroxyphenylacetate decarboxylase glycyl radical subunit from Clostridium scatologenes.